A 576-amino-acid chain; its full sequence is MAQGVLWILLGLLLWSDPGTASLPLLMDSVIQALAELEQKVPAAKTRHTASAWLMSAPNSGPHNRLYHFLLGAWSLNATELDPCPLSPELLGLTKEVARHDVREGKEYGVVLAPDGSTVAVEPLLAGLEAGLQGRRVINLPLDSMAAPWETGDTFPDVVAIAPDVRATSSPGLRDGSPDVTTADIGANTPDATKGCPDVQASLPDAKAKSPPTMVDSLLAVTLAGNLGLTFLRGSQTQSHPDLGTEGCWDQLSAPRTFTLLDPKASLLTMAFLNGALDGVILGDYLSRTPEPRPSLSHLLSQYYGAGVARDPGFRSNFRRQNGAALTSASILAQQVWGTLVLLQRLEPVHLQLQCMSQEQLAQVAANATKEFTEAFLGCPAIHPRCRWGAAPYRGRPKLLQLPLGFLYVHHTYVPAPPCTDFTRCAANMRSMQRYHQDTQGWGDIGYSFVVGSDGYVYEGRGWHWVGAHTLGHNSRGFGVAIVGNYTAALPTEAALRTVRDTLPSCAVRAGLLRPDYALLGHRQLVRTDCPGDALFDLLRTWPHFTATVKPRPARSVSKRSRREPPPRTLPATDLQ.

The N-terminal stretch at 1 to 21 (MAQGVLWILLGLLLWSDPGTA) is a signal peptide. N-linked (GlcNAc...) asparagine glycosylation occurs at asparagine 77. Serine 239 carries the post-translational modification Phosphoserine. Deamidated asparagine occurs at positions 274 and 322. The N-linked (GlcNAc...) asparagine glycan is linked to asparagine 367. One can recognise an N-acetylmuramoyl-L-alanine amidase domain in the interval 406–532 (FLYVHHTYVP…RQLVRTDCPG (127 aa)). Residue histidine 410 coordinates Zn(2+). A disulfide bond links cysteine 419 and cysteine 425. Asparagine 485 carries an N-linked (GlcNAc...) asparagine glycan. Histidine 522 and cysteine 530 together coordinate Zn(2+). A disordered region spans residues 550–576 (KPRPARSVSKRSRREPPPRTLPATDLQ).

The protein belongs to the N-acetylmuramoyl-L-alanine amidase 2 family. Zn(2+) is required as a cofactor. As to expression, strongly expressed in liver and fetal liver, and secreted into serum. Expressed to a much lesser extent in transverse colon, lymph nodes, heart, thymus, pancreas, descending colon, stomach and testis. Isoform 2 is not detected in the liver or serum.

It localises to the secreted. The protein resides in the membrane. It catalyses the reaction Hydrolyzes the link between N-acetylmuramoyl residues and L-amino acid residues in certain cell-wall glycopeptides.. In terms of biological role, may play a scavenger role by digesting biologically active peptidoglycan (PGN) into biologically inactive fragments. Has no direct bacteriolytic activity. The protein is N-acetylmuramoyl-L-alanine amidase (PGLYRP2) of Homo sapiens (Human).